Reading from the N-terminus, the 31-residue chain is Cytochrome b6-f complex subunit 6 (31 aa).

Residues 4–26 (ITSYFGFLLAASTITPALLIGLN) traverse the membrane as a helical segment.

The protein belongs to the PetL family. The 4 large subunits of the cytochrome b6-f complex are cytochrome b6, subunit IV (17 kDa polypeptide, PetD), cytochrome f and the Rieske protein, while the 4 small subunits are PetG, PetL, PetM and PetN. The complex functions as a dimer.

The protein localises to the plastid. The protein resides in the chloroplast thylakoid membrane. In terms of biological role, component of the cytochrome b6-f complex, which mediates electron transfer between photosystem II (PSII) and photosystem I (PSI), cyclic electron flow around PSI, and state transitions. PetL is important for photoautotrophic growth as well as for electron transfer efficiency and stability of the cytochrome b6-f complex. This chain is Cytochrome b6-f complex subunit 6, found in Calycanthus floridus var. glaucus (Eastern sweetshrub).